The following is a 792-amino-acid chain: Pentatricopeptide repeat-containing protein At4g30700 (792 aa).

PPR repeat units lie at residues aspartate 51–proline 81, aspartate 82–proline 117, asparagine 118–serine 152, glutamate 153–lysine 183, aspartate 184–arginine 218, aspartate 220–serine 254, histidine 255–proline 285, aspartate 286–leucine 320, arginine 321–serine 352, histidine 353–lysine 383, serine 384–proline 418, asparagine 419–serine 453, serine 454–lysine 484, asparagine 485–proline 519, threonine 520–proline 555, and serine 556–glutamate 586. The type E motif stretch occupies residues valine 591 to glycine 666. A type E(+) motif region spans residues glutamate 667–arginine 697. The type DYW motif stretch occupies residues glutamate 698–tryptophan 792.

It belongs to the PPR family. PCMP-H subfamily.

This Arabidopsis thaliana (Mouse-ear cress) protein is Pentatricopeptide repeat-containing protein At4g30700 (DYW9).